A 259-amino-acid chain; its full sequence is Small ribosomal subunit protein uS2 (259 aa).

It belongs to the universal ribosomal protein uS2 family.

This is Small ribosomal subunit protein uS2 from Dinoroseobacter shibae (strain DSM 16493 / NCIMB 14021 / DFL 12).